A 510-amino-acid polypeptide reads, in one-letter code: GMP synthase [glutamine-hydrolyzing] (510 aa).

Residues 5 to 195 (LVLVVDFGGQ…LFNVCNLKGD (191 aa)) enclose the Glutamine amidotransferase type-1 domain. The active-site Nucleophile is Cys82. Residues His169 and Glu171 contribute to the active site. Positions 196–385 (WSMSSFAEQQ…LGIPHKLVWR (190 aa)) constitute a GMPS ATP-PPase domain. Residue 223–229 (SGGVDSS) coordinates ATP.

As to quaternary structure, homodimer.

It carries out the reaction XMP + L-glutamine + ATP + H2O = GMP + L-glutamate + AMP + diphosphate + 2 H(+). Its pathway is purine metabolism; GMP biosynthesis; GMP from XMP (L-Gln route): step 1/1. Its function is as follows. Catalyzes the synthesis of GMP from XMP. The polypeptide is GMP synthase [glutamine-hydrolyzing] (Clostridium botulinum (strain Loch Maree / Type A3)).